Here is a 756-residue protein sequence, read N- to C-terminus: Serine/threonine-protein kinase DCLK2 (756 aa).

Residues 1–44 (MASTRSIELEHFEERDKRPRPGSRRGAPSSSGGSSISGPKGNGL) form a disordered region. Over residues 7-19 (IELEHFEERDKRP) the composition is skewed to basic and acidic residues. Positions 24–43 (RRGAPSSSGGSSISGPKGNG) are enriched in low complexity. Thr-61 carries the post-translational modification Phosphothreonine. 2 consecutive Doublecortin domains span residues 72-158 (KKAR…VDYT) and 196-279 (KLVT…AQDD). 2 stretches are compositionally biased toward low complexity: residues 301–311 (KYSGSRSPGFS) and 323–346 (TPSSQLSTPKSTKSSSSSPTSPGS). The interval 301–375 (KYSGSRSPGF…GPELDRCLSP (75 aa)) is disordered. Polar residues predominate over residues 353-364 (ISAQGRSSSNVN). At Ser-361 the chain carries Phosphoserine. Positions 393 to 650 (YRIGKVIGDG…AGEILSHPWV (258 aa)) constitute a Protein kinase domain. ATP contacts are provided by residues 399 to 407 (IGDGNFAVV) and Lys-422. The active-site Proton acceptor is the Asp-514. Ser-646 is modified (phosphoserine). Phosphothreonine is present on Thr-665. Positions 707–756 (QDSSRPSREQTSPVPPSAQEAPPPLESPRPPGPPATSGCDLAGTWRRHRD) are disordered. A compositionally biased stretch (pro residues) spans 719–740 (PVPPSAQEAPPPLESPRPPGPP).

It belongs to the protein kinase superfamily. CAMK Ser/Thr protein kinase family. CaMK subfamily. As to quaternary structure, binds to and stabilizes microtubules. Interacts with MAPK8IP1/JIP-1, MAPK8IP2/JIP-2, MAPK9/JNK2, PPP1R9B/NEURABIN-2 and actin. Autophosphorylated. In terms of tissue distribution, expressed in the central and peripheral nervous system including the brain, spinal cord, cranial and dorsal root ganglia and in the parasympathetic ganglia. Present in neurons, but not in glial cells, in most forebrain areas. Strong expression in the hippocampal CA1 pyramidal cell layer. Expressed in the photoreceptor sensory cilium complex and in eyes. Also detected in individual cells of the olfactory epithelium.

Its subcellular location is the cytoplasm. The protein localises to the cytoskeleton. It carries out the reaction L-seryl-[protein] + ATP = O-phospho-L-seryl-[protein] + ADP + H(+). The enzyme catalyses L-threonyl-[protein] + ATP = O-phospho-L-threonyl-[protein] + ADP + H(+). Functionally, protein kinase with a significantly reduced Ca(2+)+/CAM affinity and dependence compared to other members of the CaMK family. May play a role in the down-regulation of CRE-dependent gene activation probably by phosphorylation of the CREB coactivator CRTC2/TORC2 and the resulting retention of TORC2 in the cytoplasm. This Mus musculus (Mouse) protein is Serine/threonine-protein kinase DCLK2 (Dclk2).